The following is an 85-amino-acid chain: Large ribosomal subunit protein bL27 (85 aa).

The segment at M1 to G22 is disordered.

Belongs to the bacterial ribosomal protein bL27 family.

This chain is Large ribosomal subunit protein bL27, found in Vibrio vulnificus (strain CMCP6).